A 62-amino-acid polypeptide reads, in one-letter code: Large ribosomal subunit protein eL19 (62 aa).

Belongs to the eukaryotic ribosomal protein eL19 family.

The polypeptide is Large ribosomal subunit protein eL19 (RPL19) (Zea mays (Maize)).